The chain runs to 257 residues: A-factor type gamma-butyrolactone 1'-reductase (1S-forming) (257 aa).

The Proton acceptor role is filled by Tyr161.

The protein belongs to the short-chain dehydrogenases/reductases (SDR) family. As to quaternary structure, homodimer.

It catalyses the reaction a (3R,4R)-3-[(1S)-1-hydroxyalkyl]-4-(hydroxymethyl)oxolan-2-one + NADP(+) = a (3R,4R)-3-alkanoyl-4-(hydroxymethyl)oxolan-2-one + NADPH + H(+). Functionally, involved in the biosynthesis of virginiae butanolide (VB), which regulates the production of antibiotic virginiamycin. Catalyzes the reduction of 6-dehydro-VB-A to VB-A, the last catalytic step in VB biosynthesis. In vitro, can use various synthetic A-factor-type analogs. In Streptomyces virginiae (Streptomyces cinnamonensis), this protein is A-factor type gamma-butyrolactone 1'-reductase (1S-forming).